The following is a 200-amino-acid chain: Golgi to ER traffic protein 1 (200 aa).

Residues 1–6 lie on the Lumenal side of the membrane; it reads MEPYTL. The chain crosses the membrane as a helical span at residues 7-26; sequence LLFIFVIQIVKQIISAVGKQ. At 27–113 the chain is on the cytoplasmic side; the sequence is SIESISWVLY…KVNTFTGYLI (87 aa). A coiled-coil region spans residues 75 to 107; the sequence is AKWTKLNRQHDKLVAEIEQLQKEVDLDKVKVNT. Residues 114–134 traverse the membrane as a helical segment; that stretch reads AILTSIPIWFFRVWYRSVVLF. At 135 to 158 the chain is on the lumenal side; the sequence is YFPPGILPRALEWSIALPFTVTGG. The chain crosses the membrane as a helical span at residues 159–175; the sequence is VSLTVWMMAAGAVASSL. The Cytoplasmic segment spans residues 176 to 200; the sequence is TFLFMFPFEKAVPKPVLAKKSPQQL.

Belongs to the WRB/GET1 family. Component of the Golgi to ER traffic (GET) complex, which is composed of GET1, GET2 and GET3. Within the complex, GET1 and GET2 form a heterotetramer which is stabilized by phosphatidylinositol binding and which binds to the GET3 homodimer.

The protein resides in the endoplasmic reticulum membrane. It is found in the golgi apparatus membrane. Its function is as follows. Required for the post-translational delivery of tail-anchored (TA) proteins to the endoplasmic reticulum. Together with GET2, acts as a membrane receptor for soluble GET3, which recognizes and selectively binds the transmembrane domain of TA proteins in the cytosol. The GET complex cooperates with the HDEL receptor ERD2 to mediate the ATP-dependent retrieval of resident ER proteins that contain a C-terminal H-D-E-L retention signal from the Golgi to the ER. The protein is Golgi to ER traffic protein 1 of Meyerozyma guilliermondii (strain ATCC 6260 / CBS 566 / DSM 6381 / JCM 1539 / NBRC 10279 / NRRL Y-324) (Yeast).